The following is a 258-amino-acid chain: Pimeloyl-[acyl-carrier protein] methyl ester esterase (258 aa).

The region spanning 16–242 (LVLLHGWGLN…AAHAPFISHP (227 aa)) is the AB hydrolase-1 domain. Residues Trp22, 82–83 (SM), and 143–147 (FLALQ) contribute to the substrate site. Residue Ser82 is the Nucleophile of the active site. Active-site residues include Asp207 and His235. His235 serves as a coordination point for substrate.

The protein belongs to the AB hydrolase superfamily. Carboxylesterase BioH family. Monomer.

It is found in the cytoplasm. It carries out the reaction 6-carboxyhexanoyl-[ACP] methyl ester + H2O = 6-carboxyhexanoyl-[ACP] + methanol + H(+). Its pathway is cofactor biosynthesis; biotin biosynthesis. Functionally, the physiological role of BioH is to remove the methyl group introduced by BioC when the pimeloyl moiety is complete. It allows to synthesize pimeloyl-ACP via the fatty acid synthetic pathway through the hydrolysis of the ester bonds of pimeloyl-ACP esters. The polypeptide is Pimeloyl-[acyl-carrier protein] methyl ester esterase (Yersinia pseudotuberculosis serotype IB (strain PB1/+)).